Consider the following 779-residue polypeptide: Protein zer-1 homolog (779 aa).

N-acetylalanine is present on alanine 2. LRR repeat units follow at residues 226–245 (SLVL…IVQL), 246–281 (HKLR…KLTR), and 291–315 (LGNL…KTDE). ARM repeat units follow at residues 440–480 (RSEQ…NFSI), 524–569 (DNDH…NITD), 571–613 (TPDN…NVAE), 615–656 (KELR…HIMF), and 727–769 (PDKY…HCSN).

This sequence belongs to the zyg-11 family. In terms of assembly, interacts with the ELOC-ELOB/Elongin BC complex. Part of an E3 ubiquitin ligase complex including ZER1, CUL2 and Elongin BC.

Its function is as follows. Serves as substrate adapter subunit in the E3 ubiquitin ligase complex ZYG11B-CUL2-Elongin BC. Acts redudantly with ZYG11B to target substrates bearing N-terminal glycine degrons for proteasomal degradation. Involved in the clearance of proteolytic fragments generated by caspase cleavage during apoptosis since N-terminal glycine degrons are strongly enriched at caspase cleavage sites. Also important in the quality control of protein N-myristoylation in which N-terminal glycine degrons are conditionally exposed after a failure of N-myristoylation. In Mus musculus (Mouse), this protein is Protein zer-1 homolog.